Consider the following 380-residue polypeptide: MLIPSSSSIPSSLSASASDSEPSSLNGSGISDQNILPNYHLHHHLINENEMEAANYAQVIKPTCEAFQDWPHTPMLYQQPQLHFMLPQHDWAYPHLAQSLPPPHHLTPSTAAVAAATIASQSSIINQTSVVTSTPSCQIKQEVERPEIIQRLMPPWPPAYQFSCDDSGSVSGAGGPHQPLSDISDDSEQTCPDDLEGFAKQFKQRRIKLGYTQADVGVALGTLYGNIFSQTTICRFEALQLSFKNMCKLKPLLFKWLEEADSTTGSPNSTFEKMTGQAGRKRKKRTSIEVNVKSRLEFHFQSNQKPNAQEITQVAMELQLEKEVVRVWFCNRRQKEKRIAPNQYDAPHPMALNNGYPMTADLFPYQAVVNHYTQQSPRQQ.

The segment covering 1–25 (MLIPSSSSIPSSLSASASDSEPSSL) has biased composition (low complexity). Disordered stretches follow at residues 1-31 (MLIP…SGIS), 167-190 (SGSV…SEQT), and 265-286 (GSPN…KKRT). The region spanning 187–261 (SEQTCPDDLE…LLFKWLEEAD (75 aa)) is the POU-specific domain. Positions 281 to 340 (KRKKRTSIEVNVKSRLEFHFQSNQKPNAQEITQVAMELQLEKEVVRVWFCNRRQKEKRIA) form a DNA-binding region, homeobox.

It belongs to the POU transcription factor family. Class-3 subfamily. Interacts with egl-27, sox-2 and sem-4. Interacts with wdr-5.1. As to expression, expressed in a series of neurons in the ring ganglia, excretory cell, dividing neuroblasts in the ventral cord and rectal cells.

The protein localises to the nucleus. Functionally, vital for embryonic development and essential for the proper function of the excretory cell. Required for the transdifferentiation of the Y rectal epithelial cell to the PDA motor neuron during larval development. This Caenorhabditis elegans protein is Homeobox protein ceh-6.